Consider the following 132-residue polypeptide: MKAKQSKTPRALATGTKLTCADNTGARIVQIVSVFGYHGVRRRQPKMGLGDIATVTVKKGTPDMRKKLVRAVVIRQKKEMRRPNGLRVSFDDNAVVVVDEKNEPKGTEIKGPVAREVAERYPKLGSMATIIV.

It belongs to the universal ribosomal protein uL14 family. As to quaternary structure, part of the 50S ribosomal subunit. Forms a cluster with proteins L3 and L24e, part of which may contact the 16S rRNA in 2 intersubunit bridges.

Its function is as follows. Binds to 23S rRNA. Forms part of two intersubunit bridges in the 70S ribosome. This chain is Large ribosomal subunit protein uL14, found in Methanoregula boonei (strain DSM 21154 / JCM 14090 / 6A8).